A 263-amino-acid chain; its full sequence is Neurogenin-2 (263 aa).

Residues 20-76 form a disordered region; sequence LGSASPASATLTPMSSSADEEEDEELRRPGSARGQRGAEAEQGVQGSPASGAGGCRP. Over residues 24-36 the composition is skewed to polar residues; the sequence is SPASATLTPMSSS. The bHLH domain maps to 112–164; it reads TRRLKANNRERNRMHNLNAALDALREVLPTFPEDAKLTKIETLRFAHNYIWAL. The segment covering 197–231 has biased composition (low complexity); the sequence is LGASGDSPSPPSSWSCTNSPASSSNSTSPYSCTLS. The disordered stretch occupies residues 197-253; that stretch reads LGASGDSPSPPSSWSCTNSPASSSNSTSPYSCTLSPASPGSDVDYWQPPPPEKHRYA.

As to quaternary structure, efficient DNA binding requires dimerization with another bHLH protein.

Its subcellular location is the nucleus. Functionally, transcriptional regulator. Involved in neuronal differentiation. Activates transcription by binding to the E box (5'-CANNTG-3'). In Mus musculus (Mouse), this protein is Neurogenin-2 (Neurog2).